Here is a 100-residue protein sequence, read N- to C-terminus: NADH-quinone oxidoreductase subunit K 2 (100 aa).

3 consecutive transmembrane segments (helical) span residues 4-24, 29-49, and 60-80; these read LNNYLILSAILFSIGTIGVLV, IVIFMCVEMMLNAVNLTFIAF, and IFVFFVMTVAAAEAAVGLALM.

It belongs to the complex I subunit 4L family. In terms of assembly, NDH-1 is composed of 14 different subunits. Subunits NuoA, H, J, K, L, M, N constitute the membrane sector of the complex.

Its subcellular location is the cell inner membrane. The catalysed reaction is a quinone + NADH + 5 H(+)(in) = a quinol + NAD(+) + 4 H(+)(out). In terms of biological role, NDH-1 shuttles electrons from NADH, via FMN and iron-sulfur (Fe-S) centers, to quinones in the respiratory chain. The immediate electron acceptor for the enzyme in this species is believed to be ubiquinone. Couples the redox reaction to proton translocation (for every two electrons transferred, four hydrogen ions are translocated across the cytoplasmic membrane), and thus conserves the redox energy in a proton gradient. This Geotalea uraniireducens (strain Rf4) (Geobacter uraniireducens) protein is NADH-quinone oxidoreductase subunit K 2.